A 344-amino-acid polypeptide reads, in one-letter code: MATPGALAKFRLPPLPTIGEIVKLFNLRAEKQLSQNFLLDLKLTDKIVRRAGNLQNAYVCEVGPGPGGITRSILNAGVEELLVVEKDTRFIPGLKMLNEASGGKVRTVHGDILTYRMDRAFPKHLIKSWDDEPPNVHIIGNLPFSVSTPLIIKWLEQVADRTGPFTYGRTQMTLTFQQEVAERLTASTKNKQRSRLSIMSQYLCNVKNCFTIPGRAFIPKPKVDVGVVHLTPFVQPKIEQPFKLVEKVVRCIFQFRRKYCHHGVSILFPEEIRIQLTEQMLRLADVDPTLRPTELTMTHFKKLCNVYREMCDQNPHLFSYNYREELRMKKLQGKSTEEEDDLLQ.

A mitochondrion-targeting transit peptide spans 1–27 (MATPGALAKFRLPPLPTIGEIVKLFNL). Positions 36, 38, 63, 85, 86, 111, 112, and 141 each coordinate S-adenosyl-L-methionine.

Belongs to the class I-like SAM-binding methyltransferase superfamily. rRNA adenine N(6)-methyltransferase family. KsgA subfamily.

It is found in the mitochondrion. It carries out the reaction adenosine(N)/adenosine(N+1) in rRNA + 4 S-adenosyl-L-methionine = N(6)-dimethyladenosine(N)/N(6)-dimethyladenosine(N+1) in rRNA + 4 S-adenosyl-L-homocysteine + 4 H(+). Mitochondrial methyltransferase which uses S-adenosyl methionine to dimethylate two highly conserved adjacent adenosine residues (A1583 and A1584) within the loop of helix 45 at the 3-prime end of 12S rRNA, thereby regulating the assembly or stability of the small subunit of the mitochondrial ribosome. Also required for basal transcription of mitochondrial DNA, probably via its interaction with POLRMT and TFAM. Stimulates transcription independently of the methyltransferase activity. The polypeptide is Dimethyladenosine transferase 1, mitochondrial (tfb1m.L) (Xenopus laevis (African clawed frog)).